The chain runs to 231 residues: uncharacterized protein (231 aa).

Position 10 to 34 (10 to 34 (VVTGAGSGIGEAIATLLHEEGAKVV)) interacts with NADP(+). Serine 140 provides a ligand contact to substrate. The active-site Proton acceptor is the tyrosine 153.

This sequence belongs to the short-chain dehydrogenases/reductases (SDR) family.

This is an uncharacterized protein from Staphylococcus aureus (strain MRSA252).